Here is a 222-residue protein sequence, read N- to C-terminus: Probable transaldolase (222 aa).

The Schiff-base intermediate with substrate role is filled by Lys-91.

This sequence belongs to the transaldolase family. Type 3B subfamily.

It is found in the cytoplasm. It catalyses the reaction D-sedoheptulose 7-phosphate + D-glyceraldehyde 3-phosphate = D-erythrose 4-phosphate + beta-D-fructose 6-phosphate. The protein operates within carbohydrate degradation; pentose phosphate pathway; D-glyceraldehyde 3-phosphate and beta-D-fructose 6-phosphate from D-ribose 5-phosphate and D-xylulose 5-phosphate (non-oxidative stage): step 2/3. In terms of biological role, transaldolase is important for the balance of metabolites in the pentose-phosphate pathway. In Chlorobaculum parvum (strain DSM 263 / NCIMB 8327) (Chlorobium vibrioforme subsp. thiosulfatophilum), this protein is Probable transaldolase.